Reading from the N-terminus, the 714-residue chain is Fumarate reductase flavoprotein subunit (714 aa).

FAD-binding positions include 13–16 (GGLA), 42–44 (SHS), and 49–50 (GG). His43 is modified (tele-8alpha-FAD histidine). Residues His257 and Arg273 contribute to the active site. FAD contacts are provided by residues Glu420 and 436–437 (SV).

The protein belongs to the FAD-dependent oxidoreductase 2 family. FRD/SDH subfamily. Part of an enzyme complex containing three subunits: a flavoprotein (frdA), an iron-sulfur protein (frdB), and diheme cytochrome b (frdC). The cofactor is FAD.

It is found in the cell inner membrane. The catalysed reaction is a quinone + succinate = fumarate + a quinol. Its function is as follows. The fumarate reductase enzyme complex is required for fumarate respiration. The chain is Fumarate reductase flavoprotein subunit (frdA) from Helicobacter pylori (strain ATCC 700392 / 26695) (Campylobacter pylori).